The sequence spans 155 residues: Protein-export protein SecB (155 aa).

It belongs to the SecB family. Homotetramer, a dimer of dimers. One homotetramer interacts with 1 SecA dimer.

The protein resides in the cytoplasm. One of the proteins required for the normal export of preproteins out of the cell cytoplasm. It is a molecular chaperone that binds to a subset of precursor proteins, maintaining them in a translocation-competent state. It also specifically binds to its receptor SecA. This chain is Protein-export protein SecB, found in Methylococcus capsulatus (strain ATCC 33009 / NCIMB 11132 / Bath).